A 388-amino-acid polypeptide reads, in one-letter code: Succinate--CoA ligase [ADP-forming] subunit beta (388 aa).

The ATP-grasp domain occupies 9–244 (KQLFARYGLP…QSQEDPREAQ (236 aa)). Residues K46, 53-55 (GRG), E99, T102, and E107 each bind ATP. Mg(2+) is bound by residues N199 and D213. Substrate-binding positions include N264 and 321–323 (GIV).

Belongs to the succinate/malate CoA ligase beta subunit family. As to quaternary structure, heterotetramer of two alpha and two beta subunits. It depends on Mg(2+) as a cofactor.

The enzyme catalyses succinate + ATP + CoA = succinyl-CoA + ADP + phosphate. It catalyses the reaction GTP + succinate + CoA = succinyl-CoA + GDP + phosphate. It participates in carbohydrate metabolism; tricarboxylic acid cycle; succinate from succinyl-CoA (ligase route): step 1/1. Functionally, succinyl-CoA synthetase functions in the citric acid cycle (TCA), coupling the hydrolysis of succinyl-CoA to the synthesis of either ATP or GTP and thus represents the only step of substrate-level phosphorylation in the TCA. The beta subunit provides nucleotide specificity of the enzyme and binds the substrate succinate, while the binding sites for coenzyme A and phosphate are found in the alpha subunit. The chain is Succinate--CoA ligase [ADP-forming] subunit beta from Salmonella dublin (strain CT_02021853).